The primary structure comprises 270 residues: Formamidopyrimidine-DNA glycosylase (270 aa).

The Schiff-base intermediate with DNA role is filled by proline 2. Glutamate 3 acts as the Proton donor in catalysis. The active-site Proton donor; for beta-elimination activity is lysine 57. DNA contacts are provided by histidine 90, arginine 109, and lysine 150. Residues 235–269 (LVYGNKDKPCPRCGTKIKSIIIGQRNSFFCPQCQK) form an FPG-type zinc finger. Arginine 259 serves as the catalytic Proton donor; for delta-elimination activity.

This sequence belongs to the FPG family. Monomer. Zn(2+) serves as cofactor.

The catalysed reaction is Hydrolysis of DNA containing ring-opened 7-methylguanine residues, releasing 2,6-diamino-4-hydroxy-5-(N-methyl)formamidopyrimidine.. It catalyses the reaction 2'-deoxyribonucleotide-(2'-deoxyribose 5'-phosphate)-2'-deoxyribonucleotide-DNA = a 3'-end 2'-deoxyribonucleotide-(2,3-dehydro-2,3-deoxyribose 5'-phosphate)-DNA + a 5'-end 5'-phospho-2'-deoxyribonucleoside-DNA + H(+). Involved in base excision repair of DNA damaged by oxidation or by mutagenic agents. Acts as a DNA glycosylase that recognizes and removes damaged bases. Has a preference for oxidized purines, such as 7,8-dihydro-8-oxoguanine (8-oxoG). Has AP (apurinic/apyrimidinic) lyase activity and introduces nicks in the DNA strand. Cleaves the DNA backbone by beta-delta elimination to generate a single-strand break at the site of the removed base with both 3'- and 5'-phosphates. This chain is Formamidopyrimidine-DNA glycosylase, found in Histophilus somni (strain 2336) (Haemophilus somnus).